The chain runs to 150 residues: Histone deacetylase complex subunit SAP18 (150 aa).

Belongs to the SAP18 family. Forms a complex with SIN3 and histone deacetylase. Interacts with the N-terminal residues of TRL. Interacts with BCD; in vitro and yeast cells.

The protein localises to the nucleus. It localises to the cytoplasm. Involved in the tethering of the SIN3 complex to core histone proteins. Interacts with bicoid (bcd) to repress transcription of bicoid target genes in the anterior tip of the embryo; a process known as retraction. Interacts with Trl and binds to Polycomb response elements at the bithorax complex. May contribute to the regulation of other homeotic gene expressions. The protein is Histone deacetylase complex subunit SAP18 (Bin1) of Drosophila melanogaster (Fruit fly).